A 248-amino-acid polypeptide reads, in one-letter code: Meiotically up-regulated gene 65 protein (248 aa).

Has a role in meiosis. This is Meiotically up-regulated gene 65 protein (mug65) from Schizosaccharomyces pombe (strain 972 / ATCC 24843) (Fission yeast).